The primary structure comprises 406 residues: Argininosuccinate synthase (406 aa).

Residues 12-20 (AYSGGLDTS) and alanine 39 contribute to the ATP site. Residues tyrosine 90 and serine 95 each coordinate L-citrulline. Glycine 120 is a binding site for ATP. Positions 122, 126, and 127 each coordinate L-aspartate. Asparagine 126 lines the L-citrulline pocket. L-citrulline contacts are provided by arginine 130, serine 179, serine 188, glutamate 264, and tyrosine 276.

It belongs to the argininosuccinate synthase family. Type 1 subfamily. In terms of assembly, homotetramer.

It is found in the cytoplasm. The enzyme catalyses L-citrulline + L-aspartate + ATP = 2-(N(omega)-L-arginino)succinate + AMP + diphosphate + H(+). It participates in amino-acid biosynthesis; L-arginine biosynthesis; L-arginine from L-ornithine and carbamoyl phosphate: step 2/3. This Geobacter sp. (strain M21) protein is Argininosuccinate synthase.